The sequence spans 176 residues: MAAKNLPKVFFDIAVNGQHSGRMTFKLFSDTVPKTAENFRALCTGEKGKGISGKPLHYKNSYFHRIIPGFMAQGGDFTMGDGRGGESIYGRTFKDENFTLKHKGKGLLSMANAGPNTNGSQFFITFVDTPWLDGNHTVFGQIVDGSKVLDLLEQHGSRSGMPSAKIEITDCGELKD.

In terms of domain architecture, PPIase cyclophilin-type spans 10–173 (FFDIAVNGQH…AKIEITDCGE (164 aa)).

This sequence belongs to the cyclophilin-type PPIase family.

The catalysed reaction is [protein]-peptidylproline (omega=180) = [protein]-peptidylproline (omega=0). In terms of biological role, PPIases accelerate the folding of proteins. It catalyzes the cis-trans isomerization of proline imidic peptide bonds in oligopeptides. The polypeptide is Peptidyl-prolyl cis-trans isomerase cyp6 (cyp6) (Rhizopus delemar (strain RA 99-880 / ATCC MYA-4621 / FGSC 9543 / NRRL 43880) (Mucormycosis agent)).